The primary structure comprises 324 residues: Probable acrylyl-CoA reductase AcuI (324 aa).

NADP(+) is bound by residues Y41, 156–159 (SGGV), 178–180 (SGR), R198, L242, I256, S267, and N313.

Belongs to the zinc-containing alcohol dehydrogenase family. Acrylyl-CoA reductase subfamily. As to quaternary structure, homodimer.

The protein resides in the cytoplasm. It carries out the reaction propanoyl-CoA + NADP(+) = acryloyl-CoA + NADPH + H(+). Its function is as follows. Probably catalyzes the NADPH-dependent reduction of acrylyl-CoA to propanoyl-CoA. The chain is Probable acrylyl-CoA reductase AcuI (acuI) from Escherichia coli (strain K12).